Here is a 490-residue protein sequence, read N- to C-terminus: Probable cytochrome P450 308a1 (490 aa).

Cysteine 431 contacts heme.

It belongs to the cytochrome P450 family. The cofactor is heme.

The protein resides in the endoplasmic reticulum membrane. The protein localises to the microsome membrane. In terms of biological role, may be involved in the metabolism of insect hormones and in the breakdown of synthetic insecticides. The chain is Probable cytochrome P450 308a1 (Cyp308a1) from Drosophila melanogaster (Fruit fly).